The sequence spans 529 residues: MQQRRPVRRALLSVSDKAGIIEFAQALSARGVELLSTGGTARLLAEKGLPVTEVSDYTGFPEMMDGRVKTLHPKVHGGILGRRGQDDAIMEQHHIAPIDMVVVNLYPFAETVAREGCSLEDAVENIDIGGPTMVRSAAKNHKDVAIVVKSSDYDAIIKEMDANEGSLTLDTRFDLAIKAFEHTAAYDSMIANYFGSMVPAYHGESKEAAGRFPRTLNLNFIKKQDMRYGENSHQQAAFYIEENVKEASVATATQVQGKALSYNNIADTDAALECVKEFNEPACVIVKHANPCGVAVSTSILDAYDRAYKTDPTSAFGGIIAFNRELDAETAQAIISRQFVEVIIAPSASGEALKITAAKQNVRVLTCGQWAQRVPGLDFKRVNGGLLVQDRDLGMVSEAELRVVSKRQPTEQELRDALFCWKVAKFVKSNAIVYAKENMTIGIGAGQMSRVYSAKIAGIKAADEGLEVKGSAMASDAFFPFRDGIDAAAAVGVSCVIQPGGSIRDDEVIAAADEHGIAMIFTDMRHFRH.

The 148-residue stretch at M1–V148 folds into the MGS-like domain.

Belongs to the PurH family.

The catalysed reaction is (6R)-10-formyltetrahydrofolate + 5-amino-1-(5-phospho-beta-D-ribosyl)imidazole-4-carboxamide = 5-formamido-1-(5-phospho-D-ribosyl)imidazole-4-carboxamide + (6S)-5,6,7,8-tetrahydrofolate. It carries out the reaction IMP + H2O = 5-formamido-1-(5-phospho-D-ribosyl)imidazole-4-carboxamide. It participates in purine metabolism; IMP biosynthesis via de novo pathway; 5-formamido-1-(5-phospho-D-ribosyl)imidazole-4-carboxamide from 5-amino-1-(5-phospho-D-ribosyl)imidazole-4-carboxamide (10-formyl THF route): step 1/1. The protein operates within purine metabolism; IMP biosynthesis via de novo pathway; IMP from 5-formamido-1-(5-phospho-D-ribosyl)imidazole-4-carboxamide: step 1/1. The protein is Bifunctional purine biosynthesis protein PurH of Salmonella newport (strain SL254).